The primary structure comprises 196 residues: Large ribosomal subunit protein bL9 (196 aa).

This sequence belongs to the bacterial ribosomal protein bL9 family.

Functionally, binds to the 23S rRNA. The protein is Large ribosomal subunit protein bL9 of Rhodopseudomonas palustris (strain HaA2).